The chain runs to 525 residues: GMP synthase [glutamine-hydrolyzing] (525 aa).

Positions 9–207 constitute a Glutamine amidotransferase type-1 domain; it reads RILILDFGSQ…VSDICGCEKQ (199 aa). Residue cysteine 86 is the Nucleophile of the active site. Residues histidine 181 and glutamate 183 contribute to the active site. One can recognise a GMPS ATP-PPase domain in the interval 208–400; the sequence is WTPAKIIDDA…LGLPYNMLYR (193 aa). 235–241 provides a ligand contact to ATP; it reads SGGVDSS.

In terms of assembly, homodimer.

It carries out the reaction XMP + L-glutamine + ATP + H2O = GMP + L-glutamate + AMP + diphosphate + 2 H(+). Its pathway is purine metabolism; GMP biosynthesis; GMP from XMP (L-Gln route): step 1/1. Catalyzes the synthesis of GMP from XMP. The polypeptide is GMP synthase [glutamine-hydrolyzing] (Idiomarina loihiensis (strain ATCC BAA-735 / DSM 15497 / L2-TR)).